The following is a 166-amino-acid chain: Thiamine precursor transporter HmpT (166 aa).

The next 5 membrane-spanning stretches (helical) occupy residues L14–P34, G35–F55, I62–F82, F105–G125, and W126–L146.

As to quaternary structure, in E.coli forms a stable energy-coupling factor (ECF) transporter complex composed of 2 membrane-embedded substrate-binding protein (S component), 2 ATP-binding proteins (A and A' components) and 2 transmembrane proteins (T component), probably with a stoichiometry of 2:1:1:2. May be able to interact with more than 1 S component at a time.

Its subcellular location is the cell membrane. Its function is as follows. Probably a thiamine precursor-binding protein that interacts with the energy-coupling factor (ECF) ABC-transporter complex. Unlike classic ABC transporters this ECF transporter provides the energy necessary to transport a number of different substrates. The substrates themselves are bound by transmembrane, not extracytoplasmic soluble proteins. This is Thiamine precursor transporter HmpT (hmpT) from Lactococcus lactis subsp. cremoris (strain MG1363).